The sequence spans 546 residues: Probable malate:quinone oxidoreductase (546 aa).

The protein belongs to the MQO family. It depends on FAD as a cofactor.

It carries out the reaction (S)-malate + a quinone = a quinol + oxaloacetate. It functions in the pathway carbohydrate metabolism; tricarboxylic acid cycle; oxaloacetate from (S)-malate (quinone route): step 1/1. The polypeptide is Probable malate:quinone oxidoreductase (Acinetobacter baumannii (strain AB0057)).